Reading from the N-terminus, the 171-residue chain is Flavodoxin (171 aa).

The 163-residue stretch at 4–166 (IGLFVGTTTG…RIKEWVKQLK (163 aa)) folds into the Flavodoxin-like domain.

This sequence belongs to the flavodoxin family. The cofactor is FMN.

Its function is as follows. Low-potential electron donor to a number of redox enzymes. In Trichodesmium erythraeum (strain IMS101), this protein is Flavodoxin (fld).